We begin with the raw amino-acid sequence, 218 residues long: 3-oxo-tetronate 4-phosphate decarboxylase (218 aa).

Glu-86 functions as the Proton acceptor in the catalytic mechanism. Zn(2+) is bound by residues Glu-86, His-105, and His-107. Tyr-132 (proton donor) is an active-site residue. His-172 provides a ligand contact to Zn(2+).

This sequence belongs to the aldolase class II family. AraD/FucA subfamily. The cofactor is Zn(2+).

It catalyses the reaction 3-dehydro-4-O-phospho-D-erythronate + H(+) = dihydroxyacetone phosphate + CO2. It carries out the reaction 3-dehydro-4-O-phospho-L-erythronate + H(+) = dihydroxyacetone phosphate + CO2. Catalyzes the decarboxylation of 3-oxo-tetronate 4-phosphate to dihydroxyacetone phosphate (DHAP) and CO(2). In Pectobacterium atrosepticum (strain SCRI 1043 / ATCC BAA-672) (Erwinia carotovora subsp. atroseptica), this protein is 3-oxo-tetronate 4-phosphate decarboxylase.